The primary structure comprises 261 residues: Spermatogenesis-associated protein 46 (261 aa).

A disordered region spans residues 140-159; it reads SSSSSPENTCPREATKKSRH.

In terms of tissue distribution, testis-specific.

It is found in the nucleus membrane. Its function is as follows. Plays a role in spermiogenesis and fertilization. In Homo sapiens (Human), this protein is Spermatogenesis-associated protein 46.